Here is a 557-residue protein sequence, read N- to C-terminus: GMP synthase [glutamine-hydrolyzing] (557 aa).

Residues 13–209 (TILTLDFGSQ…AVDICGANPN (197 aa)) form the Glutamine amidotransferase type-1 domain. The Nucleophile role is filled by cysteine 89. Active-site residues include histidine 183 and glutamate 185. Positions 210 to 414 (WTMSKFVDQE…LGIAHELVMR (205 aa)) constitute a GMPS ATP-PPase domain. 238–244 (SGGVDST) provides a ligand contact to ATP. Residues arginine 311, aspartate 476, lysine 549, and glutamate 555 each coordinate XMP.

Homodimer. It depends on Mg(2+) as a cofactor.

The protein localises to the cytoplasm. The protein resides in the cytosol. The catalysed reaction is XMP + L-glutamine + ATP + H2O = GMP + L-glutamate + AMP + diphosphate + 2 H(+). It participates in purine metabolism; GMP biosynthesis; GMP from XMP (L-Gln route): step 1/1. Its activity is regulated as follows. Inhibited by 6-diazo-5-oxo-l-norleucine (DON) and acivicin (ACI). Functionally, catalyzes the conversion of xanthine monophosphate (XMP) to GMP in the presence of glutamine and ATP through an adenyl-XMP intermediate. This is GMP synthase [glutamine-hydrolyzing] (gua1) from Aspergillus fumigatus (strain ATCC MYA-4609 / CBS 101355 / FGSC A1100 / Af293) (Neosartorya fumigata).